Here is a 364-residue protein sequence, read N- to C-terminus: MGMQCPICETQSHVFYCAHCINSSPDLLIRLKFDLYILGKINNALRNKVDQYLEEVDDELNTNIRNGEQLESNIGVQILKERLGKVQVLRKERQNNKIKHKISQQDRRIKEKSRYIAELRSLINGPPKNQNRFTDPQTILKAQKQLQDKLEIAKRLSIQTRSEKLAMLNKWYSIRKRDSHDIPFTISYQPVISLKNFNRLPLPLIEGSLRKLIQYMNLLEHIYCIKYPSAMFVHEDEMLSLQGHSAKLKRNAPELLQVLIKLIQMILVVMTRSKLIDERKQNIDYAWILDQYDIDGLFYHMAMSIPIDTKSGAKNIQWSTDRLVDIVCSSLGAEKEEVLLKDHKKLEPPTDKKYEVSDRWYIVG.

Residues 5–20 (CPICETQSHVFYCAHC) are cysteine repeats. A coiled-coil region spans residues 38 to 114 (LGKINNALRN…QDRRIKEKSR (77 aa)).

Belongs to the ATG14 family. Component of the autophagy-specific VPS34 PI3-kinase complex I composed of VPS15, VPS30, VPS34, ATG14 and ATG38. Interacts directly with ATG38.

It localises to the preautophagosomal structure membrane. The protein resides in the vacuole membrane. Its function is as follows. Required for cytoplasm to vacuole transport (Cvt) and autophagy as a part of the autophagy-specific VPS34 PI3-kinase complex I. This complex is essential to recruit the ATG8-phosphatidylinositol conjugate and the ATG12-ATG5 conjugate to the pre-autophagosomal structure. ATG14 mediates the specific binding of the VPS34 PI3-kinase complex I to the preautophagosomal structure (PAS). Required for survival and/or proliferation in kidneys and in brain. This is Autophagy-related protein 14 from Candida glabrata (strain ATCC 2001 / BCRC 20586 / JCM 3761 / NBRC 0622 / NRRL Y-65 / CBS 138) (Yeast).